A 160-amino-acid chain; its full sequence is Calsequestrin-2 (160 aa).

The protein belongs to the calsequestrin family. Monomer, homodimer and homooligomer. Mostly monomeric in the absence of calcium. Forms higher oligomers in a calcium-dependent manner. Dimers associate to form tetramers, that then form linear homomer chains. Interacts with ASPH and TRDN. Phosphorylation in the C-terminus, probably by CK2, moderately increases calcium buffering capacity. In terms of processing, N-glycosylated.

The protein resides in the sarcoplasmic reticulum lumen. Calsequestrin is a high-capacity, moderate affinity, calcium-binding protein and thus acts as an internal calcium store in muscle. Calcium ions are bound by clusters of acidic residues at the protein surface, especially at the interface between subunits. Can bind around 60 Ca(2+) ions. Regulates the release of lumenal Ca(2+) via the calcium release channel RYR2; this plays an important role in triggering muscle contraction. Plays a role in excitation-contraction coupling in the heart and in regulating the rate of heart beats. The protein is Calsequestrin-2 (CASQ2) of Sus scrofa (Pig).